Consider the following 389-residue polypeptide: Radial spoke head protein 3 homolog B (389 aa).

A disordered region spans residues 63–106 (PTGQVPGQPDPLELQRQQQARRRALARKRAQEQLKPRTPEPVEG). The span at 81 to 90 (QARRRALARK) shows a compositional bias: basic residues. Residues 91–106 (RAQEQLKPRTPEPVEG) show a composition bias toward basic and acidic residues. Thr143 carries the post-translational modification Phosphothreonine; by MAPK1. The stretch at 206–242 (YEEIRNVELAEVQRLEEQERRHREEKERRKKQQWEIV) forms a coiled coil. A disordered region spans residues 332–389 (EAMPPGQKTNVINGPNTVTDPSVTTLHTQKPVLDRVSSQPAPSQERKPVEEGGHLMAE). Positions 338–359 (QKTNVINGPNTVTDPSVTTLHT) are enriched in polar residues. Basic and acidic residues predominate over residues 375–389 (QERKPVEEGGHLMAE).

It belongs to the flagellar radial spoke RSP3 family. In terms of assembly, component of the axonemal radial spoke 1 (RS1) and 2 (RS2) complexes, at least composed of spoke head proteins RSPH1, RSPH3B, RSPH9 and the cilia-specific component RSPH4A or sperm-specific component RSPH6A, spoke stalk proteins RSPH14, DNAJB13, DYDC1, ROPN1L and NME5, and the RS1 complex-specific anchor protein IQUB. Interacts with IQUB. Interacts with phosphorylated MAPK1. Interacts with MEK1. Interacts with PKA regulatory subunits PRKAR1A and PRKAR1B. Interacts with RSPH1. Interacts with RSPH4A. Interacts with RSPH6A. Interacts with RSPH9. Interacts with LRRC23. As to expression, expressed in ependymal cells (at protein level).

The protein resides in the cytoplasm. Its subcellular location is the cytoskeleton. It localises to the cilium axoneme. It is found in the flagellum axoneme. Functionally, functions as part of axonemal radial spoke complexes that play an important part in the motility of sperm and cilia. Functions as a protein kinase A-anchoring protein that scaffolds the cAMP-dependent protein kinase holoenzyme. May serve as a point of convergence for MAPK and PKA signaling in cilia. The sequence is that of Radial spoke head protein 3 homolog B (Rsph3b) from Mus musculus (Mouse).